Consider the following 336-residue polypeptide: DNA-directed RNA polymerase subunit alpha (336 aa).

The interval 1 to 234 (MIEFVIPKKL…NHFKIVTEGL (234 aa)) is alpha N-terminal domain (alpha-NTD). Positions 269–336 (VYNRKIDELE…KFGLELRKGE (68 aa)) are alpha C-terminal domain (alpha-CTD).

This sequence belongs to the RNA polymerase alpha chain family. In terms of assembly, homodimer. The RNAP catalytic core consists of 2 alpha, 1 beta, 1 beta' and 1 omega subunit. When a sigma factor is associated with the core the holoenzyme is formed, which can initiate transcription.

It catalyses the reaction RNA(n) + a ribonucleoside 5'-triphosphate = RNA(n+1) + diphosphate. Functionally, DNA-dependent RNA polymerase catalyzes the transcription of DNA into RNA using the four ribonucleoside triphosphates as substrates. This chain is DNA-directed RNA polymerase subunit alpha, found in Thermotoga petrophila (strain ATCC BAA-488 / DSM 13995 / JCM 10881 / RKU-1).